We begin with the raw amino-acid sequence, 335 residues long: MKLPLLGPVSVTGFQNPWFFLALLAVLLVIGLYVVQQFARRRRVLRFANMEVLERVAPPHPSRWRHVPTILLATSLVLLTTAMAGPTSDVRIPLNRAVVMLVIDVSESMASTDVPPNRLAAAKEAGKQFADQLTPAINLGLVEFAANATLLVPPTTNRAAVKAGIDSLQPAPKTATGEGIFTALQAIATVGSVMGGGEGPPPARIVLESDGAENVPLDPNAPQGAFTAARAAKAEGVQISTISFGTPYGTVDYEGATIPVPVDDQTLQKICEITDGQAFHADSLDSLKNVYSTLQRQIGYETVKGDASMAWMLLGAVVLAGAVLAGLLLNRRLPA.

2 consecutive transmembrane segments (helical) span residues 18–38 and 67–87; these read WFFL…VQQF and VPTI…AGPT. The region spanning 98–294 is the VWFA domain; the sequence is VVMLVIDVSE…DSLKNVYSTL (197 aa). Residues 309–329 traverse the membrane as a helical segment; the sequence is MAWMLLGAVVLAGAVLAGLLL.

This sequence belongs to the UPF0353 family.

The protein localises to the cell membrane. This is UPF0353 protein MAP_3435c from Mycolicibacterium paratuberculosis (strain ATCC BAA-968 / K-10) (Mycobacterium paratuberculosis).